Reading from the N-terminus, the 305-residue chain is MVLDGFAAHFDAYLENIVREGKSEHTVAAYRRDLEELFALLAQMPSEDVGGVPQDLSRRDFTAALRRLSQRGLNARTLARKLSSWRQYCVWLVERGLLHTDPTADIKPPKQPERVPKALPQEWLNRMLDLPVDGGDPLAVRDHALFELMYGSGLRVSEIHGLNADDVYLDEAWVHVTGKGRKQRQVPLTGKSVEALKNYLPLRQTASDGKALFTGRNGTRLSQRQIQKRLAQWAAQNGDGRHVSPHMMRHSYAGHLLQASRDIRAVQELLGHSSLSTTQIYTKLDFDHIARLYDEAHPRAKRRDE.

Residues 1–93 (MVLDGFAAHF…SWRQYCVWLV (93 aa)) form the Core-binding (CB) domain. The 181-residue stretch at 114–294 (RVPKALPQEW…DFDHIARLYD (181 aa)) folds into the Tyr recombinase domain. Residues Arg-155, Lys-179, His-246, Arg-249, and His-272 contribute to the active site. The O-(3'-phospho-DNA)-tyrosine intermediate role is filled by Tyr-281.

Belongs to the 'phage' integrase family. XerC subfamily. As to quaternary structure, forms a cyclic heterotetrameric complex composed of two molecules of XerC and two molecules of XerD.

The protein resides in the cytoplasm. In terms of biological role, site-specific tyrosine recombinase, which acts by catalyzing the cutting and rejoining of the recombining DNA molecules. The XerC-XerD complex is essential to convert dimers of the bacterial chromosome into monomers to permit their segregation at cell division. It also contributes to the segregational stability of plasmids. This is Tyrosine recombinase XerC from Neisseria meningitidis serogroup C / serotype 2a (strain ATCC 700532 / DSM 15464 / FAM18).